Here is a 337-residue protein sequence, read N- to C-terminus: Methionyl-tRNA formyltransferase (337 aa).

Position 110-113 (110-113 (SLLP)) interacts with (6S)-5,6,7,8-tetrahydrofolate.

It belongs to the Fmt family.

The enzyme catalyses L-methionyl-tRNA(fMet) + (6R)-10-formyltetrahydrofolate = N-formyl-L-methionyl-tRNA(fMet) + (6S)-5,6,7,8-tetrahydrofolate + H(+). Its function is as follows. Attaches a formyl group to the free amino group of methionyl-tRNA(fMet). The formyl group appears to play a dual role in the initiator identity of N-formylmethionyl-tRNA by promoting its recognition by IF2 and preventing the misappropriation of this tRNA by the elongation apparatus. The polypeptide is Methionyl-tRNA formyltransferase (Frankia casuarinae (strain DSM 45818 / CECT 9043 / HFP020203 / CcI3)).